A 241-amino-acid chain; its full sequence is MEAAADGPAETQSPVKKDSPAKTQSPAQDTSIMSRNNADTGRVLALPEHKKKRKGNLPAESVKILRDWMYKHRFKAYPSEEEKQMLSEKTNLSLLQISNWFINARRRILPDMLQQRRNDPIIGHKTGKDAHATHLQSTKASVPAKSGPSGPDNVQSLPLWPLPKGQMSGEKQPDPESAPSQKLTRIAQPKKKVKVSITSPSSPEPVSPEEYADFSSFLLLVDAAVQRAAELELEKKQEPNP.

2 disordered regions span residues 1 to 58 (MEAA…GNLP) and 126 to 209 (TGKD…VSPE). Polar residues predominate over residues 21-39 (AKTQSPAQDTSIMSRNNAD). Positions 48-111 (EHKKKRKGNL…INARRRILPD (64 aa)) form a DNA-binding region, homeobox; TALE-type.

The protein belongs to the TALE/TGIF homeobox family.

It is found in the nucleus. Its function is as follows. May have a transcription role in testis. The protein is Homeobox protein TGIF2LX (TGIF2LX) of Gorilla gorilla gorilla (Western lowland gorilla).